We begin with the raw amino-acid sequence, 317 residues long: Beta-ketoacyl-[acyl-carrier-protein] synthase III (317 aa).

Active-site residues include Cys112 and His244. Residues 245–249 (QANLR) form an ACP-binding region. Asn274 is an active-site residue.

This sequence belongs to the thiolase-like superfamily. FabH family. In terms of assembly, homodimer.

Its subcellular location is the cytoplasm. The catalysed reaction is malonyl-[ACP] + acetyl-CoA + H(+) = 3-oxobutanoyl-[ACP] + CO2 + CoA. The protein operates within lipid metabolism; fatty acid biosynthesis. Its function is as follows. Catalyzes the condensation reaction of fatty acid synthesis by the addition to an acyl acceptor of two carbons from malonyl-ACP. Catalyzes the first condensation reaction which initiates fatty acid synthesis and may therefore play a role in governing the total rate of fatty acid production. Possesses both acetoacetyl-ACP synthase and acetyl transacylase activities. Its substrate specificity determines the biosynthesis of branched-chain and/or straight-chain of fatty acids. This Citrobacter koseri (strain ATCC BAA-895 / CDC 4225-83 / SGSC4696) protein is Beta-ketoacyl-[acyl-carrier-protein] synthase III.